Consider the following 390-residue polypeptide: S-adenosylmethionine synthase 1 (390 aa).

Glu9 is a binding site for Mg(2+). His15 provides a ligand contact to ATP. Glu43 contacts K(+). L-methionine contacts are provided by Glu56 and Gln99. ATP is bound by residues 167-169 (DGK), 235-238 (SGRF), Asp246, 252-253 (RK), Ala269, Lys273, and Lys277. Asp246 contributes to the L-methionine binding site. An L-methionine-binding site is contributed by Lys277.

The protein belongs to the AdoMet synthase family. As to quaternary structure, homotetramer. It depends on Mn(2+) as a cofactor. Requires Mg(2+) as cofactor. Co(2+) serves as cofactor. K(+) is required as a cofactor.

The protein resides in the cytoplasm. It carries out the reaction L-methionine + ATP + H2O = S-adenosyl-L-methionine + phosphate + diphosphate. It functions in the pathway amino-acid biosynthesis; S-adenosyl-L-methionine biosynthesis; S-adenosyl-L-methionine from L-methionine: step 1/1. In terms of biological role, catalyzes the formation of S-adenosylmethionine from methionine and ATP. The reaction comprises two steps that are both catalyzed by the same enzyme: formation of S-adenosylmethionine (AdoMet) and triphosphate, and subsequent hydrolysis of the triphosphate. The polypeptide is S-adenosylmethionine synthase 1 (SAM1) (Actinidia chinensis var. chinensis (Chinese soft-hair kiwi)).